The sequence spans 154 residues: Small ribosomal subunit protein uS13m (154 aa).

Residues 1–30 (MLGLRRSATTLFDISQSLLRNVTFHGLRVQ) constitute a mitochondrion transit peptide. The interval 121–154 (RHGLPCRGQRTSTNARTKKGKAVAIAGKKKAPRK) is disordered. Over residues 136-154 (RTKKGKAVAIAGKKKAPRK) the composition is skewed to basic residues.

It belongs to the universal ribosomal protein uS13 family. Part of the small ribosomal subunit.

Its subcellular location is the mitochondrion. Located at the top of the head of the small subunit, it contacts several helices of the 18S rRNA. This Arabidopsis thaliana (Mouse-ear cress) protein is Small ribosomal subunit protein uS13m (RPS13).